The primary structure comprises 60 residues: UPF0434 protein Pnap_1922 (60 aa).

The protein belongs to the UPF0434 family.

In Polaromonas naphthalenivorans (strain CJ2), this protein is UPF0434 protein Pnap_1922.